Here is a 341-residue protein sequence, read N- to C-terminus: L-threonine 3-dehydrogenase (341 aa).

Residue cysteine 38 coordinates Zn(2+). Catalysis depends on charge relay system residues threonine 40 and histidine 43. Residues histidine 63, glutamate 64, cysteine 93, cysteine 96, cysteine 99, and cysteine 107 each coordinate Zn(2+). NAD(+) is bound by residues isoleucine 175, aspartate 195, arginine 200, 262 to 264 (LGI), and 286 to 287 (IY).

Belongs to the zinc-containing alcohol dehydrogenase family. As to quaternary structure, homotetramer. It depends on Zn(2+) as a cofactor.

The protein resides in the cytoplasm. It catalyses the reaction L-threonine + NAD(+) = (2S)-2-amino-3-oxobutanoate + NADH + H(+). It functions in the pathway amino-acid degradation; L-threonine degradation via oxydo-reductase pathway; glycine from L-threonine: step 1/2. Functionally, catalyzes the NAD(+)-dependent oxidation of L-threonine to 2-amino-3-ketobutyrate. The polypeptide is L-threonine 3-dehydrogenase (Alteromonas mediterranea (strain DSM 17117 / CIP 110805 / LMG 28347 / Deep ecotype)).